We begin with the raw amino-acid sequence, 646 residues long: Probable lysosomal cobalamin transporter (646 aa).

5 helical membrane-spanning segments follow: residues 11–31 (LIWV…VITT), 42–62 (IAVS…VFLL), 102–122 (TLYT…YFWF), 149–169 (LGFV…PAAG), and 193–213 (ALTF…ILYT). Asn-297 carries an N-linked (GlcNAc...) asparagine glycan. A run of 2 helical transmembrane segments spans residues 317–337 (LLGG…MLIT) and 380–400 (ILMA…LATI). 2 disordered regions span residues 459-588 (QPAA…PPRR) and 603-623 (VGRA…DKKE). 2 stretches are compositionally biased toward low complexity: residues 460 to 490 (PAAA…SPAA) and 517 to 543 (PSTS…RTPR). An N-linked (GlcNAc...) asparagine glycan is attached at Asn-545. Low complexity predominate over residues 565–582 (APAAALARPGAISPAAPR). N-linked (GlcNAc...) asparagine glycosylation is present at Asn-626.

It belongs to the LIMR family. LMBRD1 subfamily.

The protein localises to the lysosome membrane. Functionally, probable lysosomal cobalamin transporter. Required to export cobalamin from lysosomes allowing its conversion to cofactors. This is Probable lysosomal cobalamin transporter from Chaetomium globosum (strain ATCC 6205 / CBS 148.51 / DSM 1962 / NBRC 6347 / NRRL 1970) (Soil fungus).